The following is a 129-amino-acid chain: Ribosome-binding factor A (129 aa).

It belongs to the RbfA family. As to quaternary structure, monomer. Binds 30S ribosomal subunits, but not 50S ribosomal subunits or 70S ribosomes.

The protein resides in the cytoplasm. One of several proteins that assist in the late maturation steps of the functional core of the 30S ribosomal subunit. Associates with free 30S ribosomal subunits (but not with 30S subunits that are part of 70S ribosomes or polysomes). Required for efficient processing of 16S rRNA. May interact with the 5'-terminal helix region of 16S rRNA. This Stutzerimonas stutzeri (strain A1501) (Pseudomonas stutzeri) protein is Ribosome-binding factor A.